The following is a 350-amino-acid chain: MKKIAIIFGGNSPEYTVSLASATSAIEALQSSPYDYDLSLIGIAPDAMDWYLYTGELENIRQDTWLLDTKHKQKIQPLFEGNGFWLSEEQQTLVPDVLFPIMHGKYGEDGSIQGLFELMKLPYVGCGVAGSALCMNKWLLHQAAAAIGVQSAPTILLTNQANQQEQIEAFIQTHGFPVFFKPNEAGSSKGITKVTCVEEIASALKEAFTYCSAVLLQKNIAGVEIGCGILGNDSLTVGACDAISLVDGFFDFEEKYQLISAKITVPAPLPETIETKVKEQAQLLYRSLGLKGLARIDFFVTERGELYLNEINTMPGFTSHSRYPAMMAAVGLSYQELLQKLLVLAKEEVK.

Catalysis depends on residues E14 and S187. Residues 141–343 (HQAAAAIGVQ…YQELLQKLLV (203 aa)) form the ATP-grasp domain. 171–226 (IQTHGFPVFFKPNEAGSSKGITKVTCVEEIASALKEAFTYCSAVLLQKNIAGVEIG) serves as a coordination point for ATP. Mg(2+) is bound by residues D297, E310, and N312. Mn(2+) contacts are provided by D297, E310, and N312. The active site involves S321.

It belongs to the D-alanine--D-alanine ligase family. In terms of assembly, homodimer. Requires Mg(2+) as cofactor. The cofactor is Mn(2+).

It localises to the cell membrane. The catalysed reaction is D-serine + D-alanine + ATP = D-alanyl-D-serine + ADP + phosphate + H(+). It functions in the pathway cell wall biogenesis; peptidoglycan biosynthesis. Inhibited by D-cycloserine. In terms of biological role, required for low-level resistance to the glycopeptide antibiotic vancomycin. D-alanine--D-alanine ligase of altered specificity, which catalyzes synthesis of D-Ala-D-Ser; produces a peptidoglycan which does not terminate in D-alanine but in D-serine, thus probably reducing affinity for vancomycin. Only insignificant catalytic synthesis of D-Ala-D-Ala in vitro. The chain is Vancomycin C-type resistance protein VanC2 from Enterococcus casseliflavus (Enterococcus flavescens).